The sequence spans 275 residues: Bis(5'-nucleosyl)-tetraphosphatase, symmetrical (275 aa).

The protein belongs to the Ap4A hydrolase family.

It catalyses the reaction P(1),P(4)-bis(5'-adenosyl) tetraphosphate + H2O = 2 ADP + 2 H(+). Hydrolyzes diadenosine 5',5'''-P1,P4-tetraphosphate to yield ADP. The polypeptide is Bis(5'-nucleosyl)-tetraphosphatase, symmetrical (Actinobacillus succinogenes (strain ATCC 55618 / DSM 22257 / CCUG 43843 / 130Z)).